Reading from the N-terminus, the 125-residue chain is Synaptobrevin (125 aa).

Residues 1 to 46 are disordered; it reads MSGPQNPQAGPGGPPSGPPQPGGPPGPPQGPPQPVQQSKRLQQTQA. At 1–103 the chain is on the cytoplasmic side; it reads MSGPQNPQAG…KRKFWWKNCK (103 aa). Residues 12 to 34 are compositionally biased toward pro residues; sequence GGPPSGPPQPGGPPGPPQGPPQP. A v-SNARE coiled-coil homology domain is found at 40–100; the sequence is RLQQTQAQVE…GKLKRKFWWK (61 aa). Residues 104–123 traverse the membrane as a helical; Anchor for type IV membrane protein segment; it reads MMIILGGIVAVIVTVIIVWA. The Vesicular portion of the chain corresponds to 124-125; that stretch reads AT.

It belongs to the synaptobrevin family.

The protein resides in the cytoplasmic vesicle. Its subcellular location is the secretory vesicle. The protein localises to the synaptic vesicle membrane. It localises to the synapse. It is found in the synaptosome. Functionally, intrinsic membrane protein of small synaptic vesicles. This is Synaptobrevin from Doryteuthis pealeii (Longfin inshore squid).